A 309-amino-acid polypeptide reads, in one-letter code: Formate-nitrite transporter (309 aa).

At 1 to 19 the chain is on the cytoplasmic side; that stretch reads MPPNNSKYVLDPVSIKSVC. Positions 20–35 form an intramembrane region, helical; that stretch reads GGEESYIRCVEYGKKK. Residues 36–40 lie on the Cytoplasmic side of the membrane; sequence AHYSN. Residues 41–68 form a helical membrane-spanning segment; the sequence is LNLLAKAILAGMFVGLCAHASGIAGGLF. The Extracellular segment spans residues 69-79; that stretch reads YYHKLREIVGA. The helical transmembrane segment at 80-100 threads the bilayer; it reads SMSVFVYGFTFPIAFMCIICT. Topologically, residues 101–122 are cytoplasmic; sequence GSDLFTGNTLAVTMALYEKKVK. A helical membrane pass occupies residues 123–150; sequence LLDYLRVMTISLFGNYVGAVSFAFFVSY. Residues 151–163 lie on the Extracellular side of the membrane; the sequence is LSGAFTNVHAVEK. Positions 164–179 form an intramembrane region, helical; it reads NHFFQFLNDIAEKKVH. Residues 180-181 are Extracellular-facing; sequence HT. Residues 182-206 traverse the membrane as a helical segment; it reads FVECVSLAVGCNIFVCLAVYFVLTL. Topologically, residues 207–209 are cytoplasmic; that stretch reads KDG. A helical transmembrane segment spans residues 210–226; sequence AGYVFSVFFAVYAFAIA. The Extracellular portion of the chain corresponds to 227–249; sequence GYEHIIANIYTLNIALMVNTKIT. Residues 250–280 form a helical membrane-spanning segment; sequence VYQAYIKNLLPTLLGNYIAGAIVLGLPLYFI. Residues 281-309 are Cytoplasmic-facing; sequence YKEHYYNFERSKRDNNDAQMKSLSIELRN.

Belongs to the FNT transporter (TC 1.A.16) family. As to quaternary structure, homopentamer.

Its subcellular location is the cell membrane. The protein resides in the vacuole membrane. It carries out the reaction (S)-lactate(in) + H(+)(in) = (S)-lactate(out) + H(+)(out). It catalyses the reaction formate(in) + H(+)(in) = formate(out) + H(+)(out). The catalysed reaction is pyruvate(out) + H(+)(out) = pyruvate(in) + H(+)(in). The enzyme catalyses acetate(out) + H(+)(out) = acetate(in) + H(+)(in). With respect to regulation, inhibited by diethylpyrocarbonate (DEPC). Protonophores, such as 2,4-dinitrophenol and carbonylcyanide-3-chlorophenylhydrazone, abolish transport. Inhibited by phloretin, furosemide, alpha-cyano-4-hydroxy-cinnamate and alpha-fluorocinnamate. Inhibited by the Malaria Box compound MMV007839 and its derivatives BH296 and BH267.meta. Inhibited by the Malaria Box compound MMV000972. Inhibited by broad-specificity anion transport inhibitor NPPB. Its function is as follows. Monocarboxylate-proton symporter that mediates the efflux of the waste product lactate in the intraerythrocytic parasites; active in acidic-to-neutral pH range. Transports L-lactate. Transports D-lactate, pyruvate, acetate and formate. Essential for asexual growth but dispensable for the development of gametocytes. This chain is Formate-nitrite transporter, found in Plasmodium falciparum (isolate 3D7).